The sequence spans 281 residues: Large ribosomal subunit protein uL22 (281 aa).

Positions 1-225 (MASPMGSTAS…KAGGAAEAEV (225 aa)) are large ribosomal subunit protein uL22. Disordered regions lie at residues 137–175 (RATK…PVAA) and 199–281 (AVAS…GGTR). The segment covering 139–153 (TKKAVPKGARHRRRL) has biased composition (basic residues). 2 stretches are compositionally biased toward low complexity: residues 159–175 (PAAS…PVAA) and 199–239 (AVAS…APAA). The segment at 226–281 (ATTDEQTTETAPAAEAEKPAVRRPAARKSTTSARRRAAETEGHDSDAESTDEGGTR) is unknown. Residues 261–271 (RAAETEGHDSD) show a composition bias toward basic and acidic residues. Acidic residues predominate over residues 272-281 (AESTDEGGTR).

This sequence belongs to the universal ribosomal protein uL22 family. Part of the 50S ribosomal subunit.

The globular domain of the protein is located near the polypeptide exit tunnel on the outside of the subunit, while an extended beta-hairpin is found that lines the wall of the exit tunnel in the center of the 70S ribosome. In terms of biological role, this protein binds specifically to 23S rRNA; its binding is stimulated by other ribosomal proteins, e.g. L4, L17, and L20. It is important during the early stages of 50S assembly. It makes multiple contacts with different domains of the 23S rRNA in the assembled 50S subunit and ribosome. The sequence is that of Large ribosomal subunit protein uL22 from Acidothermus cellulolyticus (strain ATCC 43068 / DSM 8971 / 11B).